The chain runs to 286 residues: Pyridoxine 4-dehydrogenase (286 aa).

Tyr-59 serves as the catalytic Proton donor. 210 to 218 (FPLGGFTPL) is an NADP(+) binding site.

This sequence belongs to the aldo/keto reductase family. Aldo/keto reductase 2 subfamily.

It catalyses the reaction pyridoxine + NADP(+) = pyridoxal + NADPH + H(+). The enzyme catalyses pyridoxine + NAD(+) = pyridoxal + NADH + H(+). In terms of biological role, catalyzes the NAD(P)H-dependent reduction of pyridoxal to pyridoxine in vitro. Is not able to reduce 4-pyridoxate, and to oxidize pyridoxine or pyridoxamine. Has Kemp eliminase activity towards the non-physiological substrate 5-nitrobenzisoxazole, producing 4-nitro-2-cyanophenol; this activity is not considered to be physiologically relevant. This is Pyridoxine 4-dehydrogenase from Escherichia coli (strain K12).